The sequence spans 110 residues: IQ domain-containing protein J (110 aa).

An IQ domain is found at 47–67; that stretch reads ESKVKIIQRAWREYLQRQDPL. The disordered stretch occupies residues 63–99; it reads RQDPLEKRSPSPPSVSSDKLSSSVSMNTFSDSSTPVS. A compositionally biased stretch (low complexity) spans 76–87; sequence SVSSDKLSSSVS. Residues 88 to 99 show a composition bias toward polar residues; it reads MNTFSDSSTPVS.

The polypeptide is IQ domain-containing protein J (Mus musculus (Mouse)).